The primary structure comprises 160 residues: MSTSVDYIEMKIPAEPEYVGIVRLTLSGVASRMGYTYDDIEDLKIAVSEACTNAVQHAYNDENKGEVSVRFGVFEDRLEVIVADQGDSFDFDQKQQDLGPYTPSHTVDQLSEGGLGLYLMETLMDEVKVQSNSGVTVAMTKYLNGERVDHGTTIKNYETN.

It belongs to the anti-sigma-factor family.

The enzyme catalyses L-seryl-[protein] + ATP = O-phospho-L-seryl-[protein] + ADP + H(+). The catalysed reaction is L-threonyl-[protein] + ATP = O-phospho-L-threonyl-[protein] + ADP + H(+). Negative regulator of sigma-B activity. Phosphorylates and inactivates its specific antagonist protein, RsbV. Upon phosphorylation of RsbV, RsbW is released and binds to sigma-B, thereby blocking its ability to form an RNA polymerase holoenzyme (E-sigma-B). The sequence is that of Serine-protein kinase RsbW from Bacillus velezensis (strain DSM 23117 / BGSC 10A6 / LMG 26770 / FZB42) (Bacillus amyloliquefaciens subsp. plantarum).